Consider the following 902-residue polypeptide: Leucine-rich repeat-containing G-protein coupled receptor 5A (902 aa).

Positions 1-22 (MDTSRTSLFLCSVLYSLQLVGS) are cleaved as a signal peptide. Residues 23–557 (ARPGKQHRSC…DHLFGSWLTR (535 aa)) lie on the Extracellular side of the membrane. 2 disulfides stabilise this stretch: C32/C38 and C36/C49. In terms of domain architecture, LRRNT spans 32 to 61 (CPTPCECEQDGMLVRVDCSDRGLTGLPRNI). LRR repeat units follow at residues 41 to 61 (DGML…PRNI), 62 to 85 (SIFT…ALHN), 86 to 109 (LHFL…AFAG), 111 to 133 (GSLK…ALQN), 134 to 157 (LRSL…SFNG), 159 to 181 (FSLR…ALES), 182 to 205 (LSAL…AFGN), 207 to 229 (SSLV…CFDG), 230 to 253 (LHSL…IKTL), 254 to 276 (KNLK…AFIG), 278 to 300 (PSLI…AFQH), 301 to 324 (LPEL…LTGT), 325 to 347 (TSLE…VCNQ), 348 to 372 (LPNL…GCQR), 374 to 393 (QKID…TFQQ), 394 to 417 (LVGL…SFSS), and 418 to 441 (LPSL…GLHG). N-linked (GlcNAc...) asparagine glycosylation is found at N60 and N74. N205 carries an N-linked (GlcNAc...) asparagine glycan. The cysteines at positions 345 and 370 are disulfide-linked. A disulfide bridge links C476 with C537. Residue N496 is glycosylated (N-linked (GlcNAc...) asparagine). A helical transmembrane segment spans residues 558–578 (IGVWLIVLLSFVCNALVIATV). Residues 579 to 589 (FRPLSYVPSIK) lie on the Cytoplasmic side of the membrane. A helical transmembrane segment spans residues 590 to 610 (LLIGLIAIINTLMGLSSGVLA). One copy of the LRR 18 repeat lies at 598–619 (INTLMGLSSGVLATVDALTFGN). Residues 611-634 (TVDALTFGNFAQYGAWWESGVGCQ) lie on the Extracellular side of the membrane. A disulfide bridge links C633 with C708. A helical transmembrane segment spans residues 635–655 (ITGFLSVFAAETSVFLLTVAA). Over 656–678 (LERGFSIKCTTKFETKSSFLSVK) the chain is Cytoplasmic. The helical transmembrane segment at 679 to 699 (LSIVFCFLLSIIIAVSPLMSG) threads the bilayer. Residues 700 to 718 (STYGTSPFCFPLLFGDPSS) are Extracellular-facing. The chain crosses the membrane as a helical span at residues 719-739 (MVFMVALVLLNSLCFLVMTVA). Topologically, residues 740 to 763 (YTKLYCSLEKGELENVWDCSMVKH) are cytoplasmic. A helical membrane pass occupies residues 764–784 (IALLLFTNCILYCPVAFLSFS). The Extracellular portion of the chain corresponds to 785–798 (SLLNLTFISPEVNK). N788 and N797 each carry an N-linked (GlcNAc...) asparagine glycan. The chain crosses the membrane as a helical span at residues 799 to 819 (SILLLIIPLPACLNPLLYILF). The Cytoplasmic portion of the chain corresponds to 820–902 (NPHFKEDIGS…LSAVAFVPCH (83 aa)).

It belongs to the G-protein coupled receptor 1 family. In terms of tissue distribution, expressed in the developing epithelial stem cells of the intestine.

The protein localises to the cell membrane. It localises to the golgi apparatus. It is found in the trans-Golgi network membrane. Its function is as follows. Receptor for R-spondins that potentiates the canonical Wnt signaling pathway and acts as a stem cell marker of the intestinal epithelium and the hair follicle. Upon binding to R-spondins (RSPO1, RSPO2, RSPO3 or RSPO4), associates with phosphorylated LRP6 and frizzled receptors that are activated by extracellular Wnt receptors, triggering the canonical Wnt signaling pathway to increase expression of target genes. In contrast to classical G-protein coupled receptors, does not activate heterotrimeric G-proteins to transduce the signal. Involved in the development and/or maintenance of the adult intestinal stem cells during postembryonic development. This is Leucine-rich repeat-containing G-protein coupled receptor 5A (lgr5-a) from Xenopus laevis (African clawed frog).